A 319-amino-acid chain; its full sequence is Transcriptional regulator LsrR (319 aa).

A DNA-binding region (H-T-H motif) is located at residues 32–55; the sequence is QSEISERLGLTRLKVSRLLEKGHQ.

The protein belongs to the SorC transcriptional regulatory family.

The protein resides in the cytoplasm. With respect to regulation, inactivated by phosphorylated autoinducer-2 (phospho-AI-2). Phospho-AI-2 acts by binding to LsrR, which is then unable to bind to the promoter regions, allowing the transcription of the target genes. Transcriptional regulator that represses the expression of the lsr operon in the absence of the quorum-sensing signaling molecule autoinducer 2 (AI-2). It also represses the expression of the lsrRK operon. Acts by binding to the intergenic region between the lsr operon and lsrR. In the presence of phosphorylated autoinducer-2 (phospho-AI-2), LsrR is inactivated, leading to the transcription of the genes. The polypeptide is Transcriptional regulator LsrR (lsrR) (Salmonella paratyphi A (strain ATCC 9150 / SARB42)).